Here is a 172-residue protein sequence, read N- to C-terminus: Cytidylate kinase (172 aa).

Position 8–16 (8–16) interacts with ATP; sequence GPPGSGKST.

The protein belongs to the cytidylate kinase family. Type 2 subfamily.

Its subcellular location is the cytoplasm. The enzyme catalyses CMP + ATP = CDP + ADP. It carries out the reaction dCMP + ATP = dCDP + ADP. This is Cytidylate kinase from Ignicoccus hospitalis (strain KIN4/I / DSM 18386 / JCM 14125).